We begin with the raw amino-acid sequence, 233 residues long: Small ribosomal subunit protein uS3 (233 aa).

A KH type-2 domain is found at 39–107 (VRQFLTKELS…PAQINIAEVR (69 aa)).

The protein belongs to the universal ribosomal protein uS3 family. In terms of assembly, part of the 30S ribosomal subunit. Forms a tight complex with proteins S10 and S14.

Binds the lower part of the 30S subunit head. Binds mRNA in the 70S ribosome, positioning it for translation. In Vibrio vulnificus (strain CMCP6), this protein is Small ribosomal subunit protein uS3.